We begin with the raw amino-acid sequence, 69 residues long: Large ribosomal subunit protein uL29 (69 aa).

This sequence belongs to the universal ribosomal protein uL29 family.

This chain is Large ribosomal subunit protein uL29 (rpmC), found in Lactococcus lactis subsp. lactis (strain IL1403) (Streptococcus lactis).